The primary structure comprises 419 residues: Enolase (419 aa).

Position 161 (Gln161) interacts with (2R)-2-phosphoglycerate. Residue Glu205 is the Proton donor of the active site. Mg(2+) contacts are provided by Asp240, Glu283, and Asp309. Positions 334, 363, 364, and 385 each coordinate (2R)-2-phosphoglycerate. The Proton acceptor role is filled by Lys334.

This sequence belongs to the enolase family. The cofactor is Mg(2+).

The protein resides in the cytoplasm. Its subcellular location is the secreted. It is found in the cell surface. It catalyses the reaction (2R)-2-phosphoglycerate = phosphoenolpyruvate + H2O. It participates in carbohydrate degradation; glycolysis; pyruvate from D-glyceraldehyde 3-phosphate: step 4/5. Functionally, catalyzes the reversible conversion of 2-phosphoglycerate (2-PG) into phosphoenolpyruvate (PEP). It is essential for the degradation of carbohydrates via glycolysis. The protein is Enolase of Saccharolobus solfataricus (strain ATCC 35092 / DSM 1617 / JCM 11322 / P2) (Sulfolobus solfataricus).